The following is a 235-amino-acid chain: RNA pyrophosphohydrolase (235 aa).

The Nudix hydrolase domain maps to 6–149 (GFRPNVGIIL…KRGVYEMALT (144 aa)). The Nudix box motif lies at 38–59 (GGIDRGENPEQAMFRELHEEVG). The disordered stretch occupies residues 184 to 235 (ANQSGEPGSFPAAGGIPSYATRPGAPFELPPGATFEPDPQTSFGVNAPTKKT).

The protein belongs to the Nudix hydrolase family. RppH subfamily. A divalent metal cation serves as cofactor.

Accelerates the degradation of transcripts by removing pyrophosphate from the 5'-end of triphosphorylated RNA, leading to a more labile monophosphorylated state that can stimulate subsequent ribonuclease cleavage. This Polaromonas naphthalenivorans (strain CJ2) protein is RNA pyrophosphohydrolase.